The sequence spans 610 residues: Probable pleckstrin homology domain-containing family N member 1 (610 aa).

The disordered stretch occupies residues 1-30; it reads MGNSHCVPQAPRRLRASFSRKPSLKGNRED. Gly-2 carries N-myristoyl glycine lipidation. The segment at 61–100 is interaction with C1QBP; sequence TDIPGPEHHPENLEQPFLSVFKKGWRRTPVRNLGKVVHYS. PH domains are found at residues 96 to 192 and 227 to 324; these read VVHY…MALL and AICA…SRRD. Tyr-307 is subject to Phosphotyrosine. Disordered stretches follow at residues 327-357, 371-431, 443-473, and 493-610; these read HLPPGPESFPGLQKPTQLVGRGRGSLSSNGR, QSLP…PLPL, LDSGPEAQDHSLDIPHSPLYADPYTPPATSR, and PGPD…IQWI. 2 stretches are compositionally biased toward polar residues: residues 371-380 and 391-402; these read QSLPESSVPT and NQTDSNCVSTGQ. The residue at position 462 (Tyr-462) is a Phosphotyrosine. Residues 504-526 are compositionally biased toward low complexity; it reads VSVSVPVSESSSGISSSPGPLGS.

As to quaternary structure, found in a complex with cytochrome c mRNA and various ribosomal proteins. Interacts with C1QBP, ELAVL1 and BID. Phosphorylation is essential for its mitochondrial localization and regulates its interaction with C1QBP. As to expression, testis and adipose tissue (at protein level). Ubiquitous.

The protein localises to the cell membrane. It is found in the mitochondrion membrane. The protein resides in the mitochondrion. In terms of biological role, controls the stability of the leptin mRNA harboring an AU-rich element (ARE) in its 3' UTR, in cooperation with the RNA stabilizer ELAVL1. Decreases the stability of the leptin mRNA by antagonizing the function of ELAVL1 by inducing its atypical recruitment from the nucleus to the cytosol. Binds to cardiolipin (CL), phosphatidic acid (PA), phosphatidylinositol 4-phosphate (PtdIns(4)P) and phosphatidylserine (PS). The protein is Probable pleckstrin homology domain-containing family N member 1 (Plekhn1) of Mus musculus (Mouse).